A 335-amino-acid chain; its full sequence is MKTILAVETSCDETAVAIVNSDKQVLAHEILSQAEHKKRGGVIPEIASRAHMEHLSGLIKSAVEKSNLNFCDLNAIAATSGPGLIGGLIVGTMMAKAIAHVAQKPFIAVNHLEAHALVIRLLHEVKFPFLVLLISGGHCQFLIAQDVGKYIKLGETLDDSLGEAFDKVAKMLGLSYPGGPLIEKLAKKGNGARFKLPRAMIKRYGCNFSFSGIKTAVKNLVQELKMSEQDVCDVCASFQECISDILLDRVSNAIIMAESLNIKINDFVITGGVAANNFLREKLKQHINLNIFFPPNDLCTDNAIMVGWTGIERLQKNYIDPLNFAPRPKWELESY.

Fe cation is bound by residues histidine 111 and histidine 115. Substrate contacts are provided by residues 133–137, aspartate 166, glycine 179, and asparagine 276; that span reads LISGG. Aspartate 301 is a Fe cation binding site.

This sequence belongs to the KAE1 / TsaD family. It depends on Fe(2+) as a cofactor.

It is found in the cytoplasm. The enzyme catalyses L-threonylcarbamoyladenylate + adenosine(37) in tRNA = N(6)-L-threonylcarbamoyladenosine(37) in tRNA + AMP + H(+). In terms of biological role, required for the formation of a threonylcarbamoyl group on adenosine at position 37 (t(6)A37) in tRNAs that read codons beginning with adenine. Is involved in the transfer of the threonylcarbamoyl moiety of threonylcarbamoyl-AMP (TC-AMP) to the N6 group of A37, together with TsaE and TsaB. TsaD likely plays a direct catalytic role in this reaction. The sequence is that of tRNA N6-adenosine threonylcarbamoyltransferase from Wolbachia sp. subsp. Drosophila simulans (strain wRi).